A 123-amino-acid chain; its full sequence is Fluoride-specific ion channel FluC (123 aa).

A run of 4 helical transmembrane segments spans residues 6 to 26 (VALV…LSGV), 38 to 58 (LLVN…IFWG), 68 to 88 (FLGT…YETF), and 100 to 120 (LLNI…GFVL). Positions 75 and 78 each coordinate Na(+).

The protein belongs to the fluoride channel Fluc/FEX (TC 1.A.43) family.

The protein resides in the cell membrane. The catalysed reaction is fluoride(in) = fluoride(out). Its activity is regulated as follows. Na(+) is not transported, but it plays an essential structural role and its presence is essential for fluoride channel function. Functionally, fluoride-specific ion channel. Important for reducing fluoride concentration in the cell, thus reducing its toxicity. The chain is Fluoride-specific ion channel FluC from Pyrococcus furiosus (strain ATCC 43587 / DSM 3638 / JCM 8422 / Vc1).